We begin with the raw amino-acid sequence, 372 residues long: Cytochrome b (372 aa).

Helical transmembrane passes span Phe-25–Met-45, Trp-69–Val-90, Trp-105–Leu-125, and Phe-170–Met-190. Heme b contacts are provided by His-75 and His-89. 2 residues coordinate heme b: His-174 and His-188. His-193 provides a ligand contact to a ubiquinone. Transmembrane regions (helical) follow at residues Tyr-218–Ile-238, Leu-280–His-300, Phe-312–Thr-332, and Tyr-339–Pro-358.

Belongs to the cytochrome b family. As to quaternary structure, the cytochrome bc1 complex contains 3 respiratory subunits (MT-CYB, CYC1 and UQCRFS1), 2 core proteins (UQCRC1 and UQCRC2) and probably 6 low-molecular weight proteins. The cofactor is heme b.

It localises to the mitochondrion inner membrane. In terms of biological role, component of the ubiquinol-cytochrome c reductase complex (complex III or cytochrome b-c1 complex) that is part of the mitochondrial respiratory chain. The b-c1 complex mediates electron transfer from ubiquinol to cytochrome c. Contributes to the generation of a proton gradient across the mitochondrial membrane that is then used for ATP synthesis. This chain is Cytochrome b (MT-CYB), found in Acrantophis dumerili (Dumeril's ground boa).